A 122-amino-acid chain; its full sequence is Large ribosomal subunit protein uL14 (122 aa).

Belongs to the universal ribosomal protein uL14 family. Part of the 50S ribosomal subunit. Forms a cluster with proteins L3 and L19. In the 70S ribosome, L14 and L19 interact and together make contacts with the 16S rRNA in bridges B5 and B8.

Its function is as follows. Binds to 23S rRNA. Forms part of two intersubunit bridges in the 70S ribosome. The polypeptide is Large ribosomal subunit protein uL14 (Paraburkholderia phytofirmans (strain DSM 17436 / LMG 22146 / PsJN) (Burkholderia phytofirmans)).